We begin with the raw amino-acid sequence, 180 residues long: MPLLNSVTTPYAEALLQVVNENLQTEEMVSEVKQLLELINDSPELEKALSSPILETDAKKKIIIEIFSNKVNSSLMNFLKLLADRQRIGILTSILERFLEIYRENSNIALATVTSAVELTDEQKGLITQKIINIAGTEKLELVTKIDPSLIGGFVASVGSKVIDASLASQIRKLGLSLSK.

Belongs to the ATPase delta chain family. In terms of assembly, F-type ATPases have 2 components, F(1) - the catalytic core - and F(0) - the membrane proton channel. F(1) has five subunits: alpha(3), beta(3), gamma(1), delta(1), epsilon(1). CF(0) has four main subunits: a(1), b(1), b'(1) and c(10-14). The alpha and beta chains form an alternating ring which encloses part of the gamma chain. F(1) is attached to F(0) by a central stalk formed by the gamma and epsilon chains, while a peripheral stalk is formed by the delta, b and b' chains.

It localises to the cellular thylakoid membrane. F(1)F(0) ATP synthase produces ATP from ADP in the presence of a proton or sodium gradient. F-type ATPases consist of two structural domains, F(1) containing the extramembraneous catalytic core and F(0) containing the membrane proton channel, linked together by a central stalk and a peripheral stalk. During catalysis, ATP synthesis in the catalytic domain of F(1) is coupled via a rotary mechanism of the central stalk subunits to proton translocation. Its function is as follows. This protein is part of the stalk that links CF(0) to CF(1). It either transmits conformational changes from CF(0) to CF(1) or is implicated in proton conduction. The chain is ATP synthase subunit delta from Prochlorococcus marinus (strain MIT 9215).